Reading from the N-terminus, the 424-residue chain is UPF0597 protein SO_1403 (424 aa).

It belongs to the UPF0597 family.

The protein is UPF0597 protein SO_1403 of Shewanella oneidensis (strain ATCC 700550 / JCM 31522 / CIP 106686 / LMG 19005 / NCIMB 14063 / MR-1).